A 332-amino-acid chain; its full sequence is Serine, glycine, tyrosine and glutamine-rich protein (332 aa).

Residues 1–17 (MMKTVLLLVVLVGVAYC) form the signal peptide. Residues 39 to 81 (SSSSSSSSSSGGGGSSGGGASGGGGGGGSSGGGGASGGGGGGS) are disordered. Over residues 48–81 (SGGGGSSGGGASGGGGGGGSSGGGGASGGGGGGS) the composition is skewed to gly residues.

Prismatic layer of shell (at protein level). Expressed primarily in the mantle with highest level in the mantle edge and lower level in the mantle pallium.

The protein localises to the secreted. The sequence is that of Serine, glycine, tyrosine and glutamine-rich protein from Margaritifera margaritifera (Freshwater pearl mussel).